Consider the following 200-residue polypeptide: Peptidyl-tRNA hydrolase (200 aa).

Tyr-16 serves as a coordination point for tRNA. His-21 functions as the Proton acceptor in the catalytic mechanism. Residues Phe-67, Asn-69, and Asn-115 each contribute to the tRNA site.

This sequence belongs to the PTH family. In terms of assembly, monomer.

The protein resides in the cytoplasm. The catalysed reaction is an N-acyl-L-alpha-aminoacyl-tRNA + H2O = an N-acyl-L-amino acid + a tRNA + H(+). Functionally, hydrolyzes ribosome-free peptidyl-tRNAs (with 1 or more amino acids incorporated), which drop off the ribosome during protein synthesis, or as a result of ribosome stalling. In terms of biological role, catalyzes the release of premature peptidyl moieties from peptidyl-tRNA molecules trapped in stalled 50S ribosomal subunits, and thus maintains levels of free tRNAs and 50S ribosomes. In Prochlorococcus marinus (strain MIT 9312), this protein is Peptidyl-tRNA hydrolase.